A 161-amino-acid polypeptide reads, in one-letter code: Anthrone oxygenase tpcL (161 aa).

Asn4 is a glycosylation site (N-linked (GlcNAc...) asparagine). 4 helical membrane passes run 15-35 (VITG…DIPV), 56-74 (IGHK…LYGY), 87-107 (LPHI…WLVM), and 136-155 (WAQL…VLGL).

The protein belongs to the anthrone oxygenase family. Specifically expressed in conidia.

The protein localises to the membrane. It catalyses the reaction emodin anthrone + O2 = emodin + H2O + H(+). Its pathway is secondary metabolite biosynthesis. In terms of biological role, anthrone oxygenase; part of the gene cluster that mediates the biosynthesis of trypacidin, a mycotoxin with antiprotozoal activity and that plays a role in the infection process. The pathway begins with the synthesis of atrochrysone thioester by the polyketide synthase (PKS) tpcC. The atrochrysone carboxyl ACP thioesterase tpcB then breaks the thioester bond and releases the atrochrysone carboxylic acid from tpcC. The decarboxylase tpcK converts atrochrysone carboxylic acid to atrochrysone which is further reduced into emodin anthrone. The next step is performed by the emodin anthrone oxygenase tpcL that catalyzes the oxidation of emodinanthrone to emodin. Emodin O-methyltransferase encoded by tpcA catalyzes methylation of the 8-hydroxy group of emodin to form questin. Ring cleavage of questin by questin oxidase tpcI leads to desmethylsulochrin via several intermediates including questin epoxide. Another methylation step catalyzed by tpcM leads to the formation of sulochrin which is further converted to monomethylsulfochrin by tpcH. Finally, the tpcJ catalyzes the conversion of monomethylsulfochrin to trypacidin. Trypacidin is toxic for human pulmonary and bronchial epithelial cells by initiating the intracellular formation of nitric oxide (NO) and hydrogen peroxide (H(2)O(2)), thus triggering host necrotic cell death. The trypacidin pathway is also able to produce endocrocin via a distinct route from the endocrocin Enc pathway. The protein is Anthrone oxygenase tpcL of Aspergillus fumigatus (strain ATCC MYA-4609 / CBS 101355 / FGSC A1100 / Af293) (Neosartorya fumigata).